The sequence spans 107 residues: Diuretic hormone 45 (107 aa).

Positions 1-44 (LYAMSPMAARYSAGAPWLYLLADMPRDSQRLVDPADLHEGRARP) are excised as a propeptide. Residue valine 91 is modified to Valine amide.

Expressed in corpora cardiaca (CC), corpora allata (CA), antennal lobe (AL) and gnathal ganglion (GNG) (at protein level). Expression in AL and GNG detected in some animals, in CC and CA in few animals (at protein level).

It localises to the secreted. Functionally, regulation of fluid secretion. The sequence is that of Diuretic hormone 45 from Agrotis ipsilon (Black cutworm moth).